The primary structure comprises 345 residues: Heat stress transcription factor A-2 (345 aa).

Positions 17–30 (GSVAASSSVGSSSS) are enriched in low complexity. A disordered region spans residues 17–40 (GSVAASSSVGSSSSPRPMEGLNET). A DNA-binding region spans residues 42-136 (PPPFLTKTYE…LLKNIKRRRN (95 aa)). Residues 150 to 216 (SCVEVGQYGF…QMMTFLAKAL (67 aa)) form a hydrophobic repeat HR-A/B region. Positions 231-238 (EKKSLFGL) match the Nuclear localization signal motif. Positions 273–282 (EMLFAAAIDD) match the AHA1 motif. Lys315 participates in a covalent cross-link: Glycyl lysine isopeptide (Lys-Gly) (interchain with G-Cter in SUMO). Positions 324 to 333 (LDWDSQDLHD) match the AHA2 motif. The short motif at 334–341 (MVDQMGFL) is the Nuclear export signal element.

The protein belongs to the HSF family. Class A subfamily. As to quaternary structure, homotrimer. Interacts with SUMO1. Binds to HSBP. Post-translationally, exhibits temperature-dependent phosphorylation. In terms of processing, sumoylated at Lys-315. Sumoylation represses its function.

The protein localises to the cytoplasm. It localises to the nucleus. Transcriptional activator that specifically binds DNA sequence 5'-AGAAnnTTCT-3' known as heat shock promoter elements (HSE). Seems to be involved in other environmental stress responses. Activates ascorbate peroxidase 2 (APX2) in addition to several heat shock protein (HSPs). Binds to the promoter of SGIP1 and activates its expression in heat acclimated plants. Involved in the mechanisms necessary for quick response to heat and subsequent heritable transgenerational memory of heat acclimation (global warming) such as early flowering and attenuated immunity; this process includes epigenetic regulation as well as post-transcriptional gene silencing (PTGS). In response to heat, HSFA2 is activated and promotes the expression of REF6 which in turn derepresses HSFA2, thus establishing an inheritable feedback loop able to trigger SGIP1 and subsequent SGIP1-mediated SGS3 degradation; this prevents the biosynthesis of trans-acting siRNA (tasiRNA) and leads to the release of HTT5, which drives early flowering but attenuates immunity. The polypeptide is Heat stress transcription factor A-2 (Arabidopsis thaliana (Mouse-ear cress)).